We begin with the raw amino-acid sequence, 2084 residues long: MAP kinase-activating death domain protein (2084 aa).

Positions 25–352 constitute a uDENN domain; it reads TPPMPKGLQG…VPVPGSTRVE (328 aa). The interval 117–253 is disordered; sequence PSSAAGSAGA…SPRASRKRTK (137 aa). A compositionally biased stretch (low complexity) spans 118-131; sequence SSAAGSAGAGNDRP. The segment covering 132 to 152 has biased composition (gly residues); sequence GNGGPGGHGGGAGGGAGGGGR. Basic and acidic residues predominate over residues 160-173; it reads FRRESWRKSMERSS. Residues 174 to 183 show a composition bias toward low complexity; that stretch reads DSAFSSDYRS. Residues 189 to 204 show a composition bias toward basic and acidic residues; sequence DSDRELTSRRDSDQQR. The segment covering 205–215 has biased composition (basic residues); the sequence is LHSHHSHHQPH. A compositionally biased stretch (polar residues) spans 234-245; the sequence is DSESGGSHSPSP. A cDENN domain is found at 373–514; the sequence is RFSLVDFPLH…EGTILKNHLK (142 aa). Residues 516 to 678 enclose the dDENN domain; that stretch reads ALTSMTATNT…EWSLTPTNVA (163 aa). 7 disordered regions span residues 557–588, 730–749, 811–863, 891–963, 1058–1092, 1115–1188, and 1305–1382; these read TPPH…NSPA, QPTD…SSSY, VASK…TVGS, QESD…SQSS, HSAG…GNNF, FGKK…AENQ, and SSSL…GQST. The span at 558-588 shows a compositional bias: polar residues; the sequence is PPHSAQASQRNSMSAQGTISSRQPSPMNSPA. Low complexity predominate over residues 824–839; the sequence is SPVSSSSSRSDLSSPS. Basic and acidic residues predominate over residues 913 to 925; it reads HPSDSESRPEKKI. Residues 946–963 are compositionally biased toward low complexity; it reads GSSGSSSSSPGRQSSQSS. The segment covering 1121–1131 has biased composition (low complexity); that stretch reads QKQVPVQQKQP. The segment covering 1168–1183 has biased composition (basic and acidic residues); the sequence is TQEELTRQQNQERSHS. Positions 1305–1315 are enriched in low complexity; that stretch reads SSSLLSSHAAS. 2 stretches are compositionally biased toward polar residues: residues 1324 to 1353 and 1370 to 1382; these read RSPS…STQL and RLSS…GQST. The Death domain occupies 1490-1565; sequence GMDQGPIEMM…GLVYSQEVHN (76 aa). A compositionally biased stretch (low complexity) spans 1794 to 1842; the sequence is DIHAQQKQKHQQQQQHQQPQQQQQPHQTTTQQNQPTAVASAVPTTTAPA. 2 disordered regions span residues 1794-1865 and 1896-2084; these read DIHA…RHTV and VPVP…HRKH. Residues 1845–1858 show a composition bias toward polar residues; that stretch reads VNPNRMTAKSQAGS. The segment covering 1896 to 1907 has biased composition (pro residues); that stretch reads VPVPPTPAPPTS. Positions 1921-1932 are enriched in polar residues; that stretch reads SQPSTESLASIS. Composition is skewed to pro residues over residues 1933 to 1953 and 1983 to 1993; these read SPPP…PAIP and QYTPQPPPPFV. 2 stretches are compositionally biased toward low complexity: residues 2001 to 2029 and 2059 to 2077; these read LARA…HSQS and ISGS…ASAS.

Belongs to the MADD family.

Its subcellular location is the cell membrane. It is found in the cytoplasm. Guanyl-nucleotide exchange factor that regulates small GTPases. Converts GDP-bound inactive form of Rab3 to the GTP-bound active forms. The chain is MAP kinase-activating death domain protein from Drosophila melanogaster (Fruit fly).